The primary structure comprises 1222 residues: ATP-dependent helicase/nuclease subunit A (1222 aa).

A UvrD-like helicase ATP-binding domain is found at 39–495; the sequence is QKRTAQQIEA…ILLKENFRSQ (457 aa). 60–67 is an ATP binding site; sequence ASAGSGKT. The UvrD-like helicase C-terminal domain maps to 524 to 810; sequence QLIAGSHAQT…NLMTIHKSKG (287 aa).

It belongs to the helicase family. AddA subfamily. As to quaternary structure, heterodimer of AddA and AddB/RexB. It depends on Mg(2+) as a cofactor.

The enzyme catalyses Couples ATP hydrolysis with the unwinding of duplex DNA by translocating in the 3'-5' direction.. The catalysed reaction is ATP + H2O = ADP + phosphate + H(+). In terms of biological role, the heterodimer acts as both an ATP-dependent DNA helicase and an ATP-dependent, dual-direction single-stranded exonuclease. Recognizes the chi site generating a DNA molecule suitable for the initiation of homologous recombination. The AddA nuclease domain is required for chi fragment generation; this subunit has the helicase and 3' -&gt; 5' nuclease activities. In Streptococcus pyogenes serotype M28 (strain MGAS6180), this protein is ATP-dependent helicase/nuclease subunit A.